Here is a 281-residue protein sequence, read N- to C-terminus: Arylamine N-acetyltransferase / N-hydroxyarylamine O-acetyltransferase (281 aa).

The Acyl-thioester intermediate role is filled by Cys-69. Active-site residues include His-107 and Asp-122.

This sequence belongs to the arylamine N-acetyltransferase family. In terms of assembly, monomer and homodimer.

The protein localises to the cytoplasm. The enzyme catalyses an arylamine + acetyl-CoA = an N-acetylarylamine + CoA. It catalyses the reaction an N-hydroxyarylamine + acetyl-CoA = an N-acetoxyarylamine + CoA. Inhibited by N-ethylmaleimide and iodoacetamide. In terms of biological role, catalyzes both the acetyl-CoA-dependent N-acetylation of aromatic amines and the O-acetylation of N-hydroxyarylamines. In vitro, catalyzes the O-acetylation of N-hydroxy-Glu-P-1, and the N-acetylation of isoniazid and 2-aminofluorene. The chain is Arylamine N-acetyltransferase / N-hydroxyarylamine O-acetyltransferase (nhoA) from Salmonella typhimurium (strain LT2 / SGSC1412 / ATCC 700720).